The chain runs to 249 residues: MSHHIVEVRDLCHCYPDGTEALRGITFRIHHGESVAVVGANGAGKSTLLLHLNGYLAPTRGDVRIGDTPVVRTTLPEVRRTVGMVFQDPDDQLFMPTVFDDVAFGPLNLGLPPAEVERRVADALEQVGVAHLHNKPPYRLSGGEKRRVAIATVLSMSPDILVLDEPTTGLDPYARRQIMGLLRDFKHTKIITSHDLDMVMELCERTIVLREGRVAADGPTRDIFGNDELLATCRLERPLSMQGCPVCGR.

The ABC transporter domain maps to 6 to 236 (VEVRDLCHCY…DELLATCRLE (231 aa)). 39–46 (GANGAGKS) is an ATP binding site.

Belongs to the ABC transporter superfamily.

It is found in the cell inner membrane. Functionally, probably part of an ABC transporter complex. Responsible for energy coupling to the transport system. The protein is Putative ABC transporter ATP-binding protein GSU1281 of Geobacter sulfurreducens (strain ATCC 51573 / DSM 12127 / PCA).